We begin with the raw amino-acid sequence, 457 residues long: MYLKAYHIYFVGIGGIGMSGIAELLLNLGYTVSGSDIRQSDITDRLTGLGGKIFYGHDGKNIGGADVVVVSSAIAADNPEVAAAREAGIPVIPRAEMLAEILRLKYSIVIAGAHGKTSTTSMVASVLGQGGMDPTVVIGGKLKSIGTNAVLGHGDYIVAEADESDGSFLKFSPSIAVVTNIDREHLDFYPDLAAISKSFLEFLDRIPFYGVAVVCLDNEPLQALVPLIKKRFITYGTSNQADLQARHITPINGKVRFSVVWRQEELGTIDLGVPGFHNVRNALAAVAVGLELGLAFAVIKEALETMAGVQRRLEKKGETGGVIVVDDYGHHPTEIKATLQGVRQHWEDRRVVVVFQPHRYSRTKALFDDFTRAFYQCDELVVLPIYAAGEHPIDGVDGESVAEGIRAHGHKGVRYVEGRAEAVAYLKEILQKGDILLTLGAGDVWRIGEDVLSGQER.

112–118 (GAHGKTS) contacts ATP.

It belongs to the MurCDEF family.

It localises to the cytoplasm. It catalyses the reaction UDP-N-acetyl-alpha-D-muramate + L-alanine + ATP = UDP-N-acetyl-alpha-D-muramoyl-L-alanine + ADP + phosphate + H(+). It functions in the pathway cell wall biogenesis; peptidoglycan biosynthesis. Cell wall formation. The protein is UDP-N-acetylmuramate--L-alanine ligase of Desulfosudis oleivorans (strain DSM 6200 / JCM 39069 / Hxd3) (Desulfococcus oleovorans).